Here is a 308-residue protein sequence, read N- to C-terminus: Cytochrome b (308 aa).

The next 4 helical transmembrane spans lie at 1-21 (FGSL…LLAT), 45-66 (WLIR…YIHI), 81-101 (WNVG…GYVL), and 146-166 (FFAL…VHLT). His51 and His65 together coordinate heme b. Heme b is bound by residues His150 and His164. Residue His169 coordinates a ubiquinone. Helical transmembrane passes span 194 to 214 (MKDI…ALFS), 256 to 276 (LGGV…PLLH), and 288 to 308 (LSQI…WVGS).

It belongs to the cytochrome b family. In terms of assembly, the cytochrome bc1 complex contains 11 subunits: 3 respiratory subunits (MT-CYB, CYC1 and UQCRFS1), 2 core proteins (UQCRC1 and UQCRC2) and 6 low-molecular weight proteins (UQCRH/QCR6, UQCRB/QCR7, UQCRQ/QCR8, UQCR10/QCR9, UQCR11/QCR10 and a cleavage product of UQCRFS1). This cytochrome bc1 complex then forms a dimer. The cofactor is heme b.

It localises to the mitochondrion inner membrane. Component of the ubiquinol-cytochrome c reductase complex (complex III or cytochrome b-c1 complex) that is part of the mitochondrial respiratory chain. The b-c1 complex mediates electron transfer from ubiquinol to cytochrome c. Contributes to the generation of a proton gradient across the mitochondrial membrane that is then used for ATP synthesis. This Ptiloprora plumbea (Leaden honeyeater) protein is Cytochrome b (MT-CYB).